A 206-amino-acid polypeptide reads, in one-letter code: uncharacterized protein (206 aa).

The N-terminal stretch at Met1 to Ala18 is a signal peptide.

This is an uncharacterized protein from Acanthamoeba polyphaga mimivirus (APMV).